A 225-amino-acid polypeptide reads, in one-letter code: Cytidylate kinase (225 aa).

Position 10–18 (10–18 (GPASSGKST)) interacts with ATP.

This sequence belongs to the cytidylate kinase family. Type 1 subfamily.

Its subcellular location is the cytoplasm. It catalyses the reaction CMP + ATP = CDP + ADP. It carries out the reaction dCMP + ATP = dCDP + ADP. The chain is Cytidylate kinase from Streptococcus sanguinis (strain SK36).